A 139-amino-acid polypeptide reads, in one-letter code: Nucleoside diphosphate kinase (139 aa).

Positions 11, 59, 87, 93, 104, and 114 each coordinate ATP. The active-site Pros-phosphohistidine intermediate is the H117.

Belongs to the NDK family. Homotetramer. Requires Mg(2+) as cofactor.

The protein resides in the cytoplasm. It catalyses the reaction a 2'-deoxyribonucleoside 5'-diphosphate + ATP = a 2'-deoxyribonucleoside 5'-triphosphate + ADP. The enzyme catalyses a ribonucleoside 5'-diphosphate + ATP = a ribonucleoside 5'-triphosphate + ADP. In terms of biological role, major role in the synthesis of nucleoside triphosphates other than ATP. The ATP gamma phosphate is transferred to the NDP beta phosphate via a ping-pong mechanism, using a phosphorylated active-site intermediate. The sequence is that of Nucleoside diphosphate kinase from Flavobacterium johnsoniae (strain ATCC 17061 / DSM 2064 / JCM 8514 / BCRC 14874 / CCUG 350202 / NBRC 14942 / NCIMB 11054 / UW101) (Cytophaga johnsonae).